The following is a 143-amino-acid chain: MVKIVDNSEVYNLIKNVTDRLGIEIIEINTFRKRGEGRVQIVLYKGDDFGVDTLCDLHKMILLNLEAVLKYNFSLEISTPGINRKIKSDREFKIFEGKKIKLMLDNDFEEGFILKAGADSFIFKTDNKEVKVLYSDVKKAKLS.

It belongs to the RimP family.

The protein localises to the cytoplasm. Required for maturation of 30S ribosomal subunits. The protein is Ribosome maturation factor RimP of Borrelia hermsii (strain HS1 / DAH).